A 234-amino-acid polypeptide reads, in one-letter code: Sugar fermentation stimulation protein homolog (234 aa).

Belongs to the SfsA family.

This is Sugar fermentation stimulation protein homolog from Pectobacterium carotovorum subsp. carotovorum (strain PC1).